The sequence spans 579 residues: Fatty-acid amide hydrolase 1 (579 aa).

Residues Ala-9–Leu-29 traverse the membrane as a helical segment. The Cytoplasmic portion of the chain corresponds to Arg-30–Asp-403. Lys-142 acts as the Charge relay system in catalysis. Substrate contacts are provided by residues Met-191, Ser-217, and Ile-238 to Ser-241. Ser-217 acts as the Charge relay system in catalysis. Ser-241 acts as the Acyl-ester intermediate in catalysis. At Ser-241 the chain carries Phosphoserine. The stretch at Leu-404–Leu-433 is an intramembrane region. The Cytoplasmic segment spans residues Asn-434–Ser-579.

This sequence belongs to the amidase family. In terms of assembly, homodimer.

Its subcellular location is the endoplasmic reticulum membrane. The protein localises to the golgi apparatus membrane. It catalyses the reaction N-(5Z,8Z,11Z,14Z-eicosatetraenoyl)-ethanolamine + H2O = ethanolamine + (5Z,8Z,11Z,14Z)-eicosatetraenoate. The catalysed reaction is (9Z)-octadecenamide + H2O = (9Z)-octadecenoate + NH4(+). The enzyme catalyses 2-(5Z,8Z,11Z,14Z-eicosatetraenoyl)-glycerol + H2O = glycerol + (5Z,8Z,11Z,14Z)-eicosatetraenoate + H(+). It carries out the reaction N-(9Z-hexadecenoyl) ethanolamine + H2O = (9Z)-hexadecenoate + ethanolamine. It catalyses the reaction N-(9Z-octadecenoyl) ethanolamine + H2O = ethanolamine + (9Z)-octadecenoate. The catalysed reaction is N-octadecanoyl ethanolamine + H2O = octadecanoate + ethanolamine. The enzyme catalyses N-docosanoyl-ethanolamine + H2O = docosanoate + ethanolamine. It carries out the reaction N-tetracosanoyl-taurine + H2O = tetracosanoate + taurine. It catalyses the reaction N-(15Z-tetracosenoyl)-ethanolamine + H2O = (15Z)-tetracosenoate + ethanolamine. The catalysed reaction is N-(9Z-octadecenoyl)-taurine + H2O = taurine + (9Z)-octadecenoate. The enzyme catalyses N-docosanoyl-taurine + H2O = docosanoate + taurine. It carries out the reaction N-(15Z-tetracosenoyl)-taurine + H2O = (15Z)-tetracosenoate + taurine. It catalyses the reaction N-tricosanoyl-taurine + H2O = tricosanoate + taurine. The catalysed reaction is (9Z,12Z,15Z)-octadecatrienamide + H2O = (9Z,12Z,15Z)-octadecatrienoate + NH4(+). The enzyme catalyses (5Z,8Z,11Z,14Z)-eicosatetraenamide + H2O = (5Z,8Z,11Z,14Z)-eicosatetraenoate + NH4(+). It carries out the reaction (6Z)-octadecenamide + H2O = (6Z)-octadecenoate + NH4(+). It catalyses the reaction (15Z)-tetracosenamide + H2O = (15Z)-tetracosenoate + NH4(+). The catalysed reaction is (8Z,11Z,14Z)-eicosatrienamide + H2O = (8Z,11Z,14Z)-eicosatrienoate + NH4(+). The enzyme catalyses (11Z,14Z,17Z)-eicosatrienamide + H2O = (11Z,14Z,17Z)-eicosatrienoate + NH4(+). It carries out the reaction (11Z,14Z)-eicosadienamide + H2O = (11Z,14Z)-eicosadienoate + NH4(+). It catalyses the reaction (9Z,12Z)-octadecadienamide + H2O = (9Z,12Z)-octadecadienoate + NH4(+). The catalysed reaction is tetradecamide + H2O = tetradecanoate + NH4(+). The enzyme catalyses 1-O-methyl-(5Z,8Z,11Z,14Z)-eicosatetraenoate + H2O = methanol + (5Z,8Z,11Z,14Z)-eicosatetraenoate + H(+). It carries out the reaction (11Z)-eicosenamide + H2O = (11Z)-eicosenoate + NH4(+). It catalyses the reaction (9Z)-octadecenoate + glycine = N-(9Z-octadecenoyl)glycine + H2O. The catalysed reaction is N-(5Z,8Z,11Z,14Z)-eicosatetraenoyl-glycine + H2O = (5Z,8Z,11Z,14Z)-eicosatetraenoate + glycine. The enzyme catalyses N-(5Z,8Z,11Z,14Z-eicosatetraenoyl)-L-serine + H2O = (5Z,8Z,11Z,14Z)-eicosatetraenoate + L-serine. Its activity is regulated as follows. Inhibited the trifluoromethyl compound PF-3845. Functionally, catalyzes the hydrolysis of endogenous amidated lipids like the endocannabinoid anandamide (N-(5Z,8Z,11Z,14Z-eicosatetraenoyl)-ethanolamine), as well as other fatty amides such as the taurine-conjugated fatty acids (a structural class of central nervous system (CNS) metabolites), to their corresponding fatty acids, thereby regulating the signaling functions of these molecules. FAAH cooperates with PM20D1 in the hydrolysis of amino acid-conjugated fatty acids such as N-fatty acyl glycine and N-fatty acyl-L-serine, thereby acting as a physiological regulator of specific subsets of intracellular, but not of extracellular, N-fatty acyl amino acids. It can also catalyze the hydrolysis of the endocannabinoid 2-arachidonoylglycerol (2-(5Z,8Z,11Z,14Z-eicosatetraenoyl)-glycerol). The sequence is that of Fatty-acid amide hydrolase 1 (Faah) from Mus musculus (Mouse).